Here is a 271-residue protein sequence, read N- to C-terminus: Formamidopyrimidine-DNA glycosylase (271 aa).

The active-site Schiff-base intermediate with DNA is P2. The Proton donor role is filled by E3. K58 acts as the Proton donor; for beta-elimination activity in catalysis. DNA is bound by residues H91, R110, and R152. Residues 237–271 (LVYGREGQPCVHCGRPIRCETIGQRSSYFCTRCQR) form an FPG-type zinc finger. R261 serves as the catalytic Proton donor; for delta-elimination activity.

It belongs to the FPG family. As to quaternary structure, monomer. The cofactor is Zn(2+).

The catalysed reaction is Hydrolysis of DNA containing ring-opened 7-methylguanine residues, releasing 2,6-diamino-4-hydroxy-5-(N-methyl)formamidopyrimidine.. It carries out the reaction 2'-deoxyribonucleotide-(2'-deoxyribose 5'-phosphate)-2'-deoxyribonucleotide-DNA = a 3'-end 2'-deoxyribonucleotide-(2,3-dehydro-2,3-deoxyribose 5'-phosphate)-DNA + a 5'-end 5'-phospho-2'-deoxyribonucleoside-DNA + H(+). Functionally, involved in base excision repair of DNA damaged by oxidation or by mutagenic agents. Acts as a DNA glycosylase that recognizes and removes damaged bases. Has a preference for oxidized purines, such as 7,8-dihydro-8-oxoguanine (8-oxoG). Has AP (apurinic/apyrimidinic) lyase activity and introduces nicks in the DNA strand. Cleaves the DNA backbone by beta-delta elimination to generate a single-strand break at the site of the removed base with both 3'- and 5'-phosphates. In Syntrophotalea carbinolica (strain DSM 2380 / NBRC 103641 / GraBd1) (Pelobacter carbinolicus), this protein is Formamidopyrimidine-DNA glycosylase.